The sequence spans 637 residues: Pentatricopeptide repeat-containing protein At1g12300, mitochondrial (637 aa).

Residues Met-1 to Phe-95 constitute a mitochondrion transit peptide. 15 PPR repeats span residues Thr-87–His-121, Asn-122–Pro-156, Asn-157–Pro-191, Asp-192–Pro-226, Asn-227–Leu-261, Asp-262–Thr-296, Asn-297–Pro-331, Asn-332–Pro-366, Asp-367–Pro-401, Asn-402–Ala-436, Asp-437–Pro-471, Asn-472–Leu-506, Asp-507–Pro-541, Gly-542–Pro-576, and Asp-577–Val-611.

This sequence belongs to the PPR family. P subfamily.

It localises to the mitochondrion. In Arabidopsis thaliana (Mouse-ear cress), this protein is Pentatricopeptide repeat-containing protein At1g12300, mitochondrial.